Reading from the N-terminus, the 214-residue chain is Probable transaldolase (214 aa).

The active-site Schiff-base intermediate with substrate is the lysine 83.

This sequence belongs to the transaldolase family. Type 3B subfamily.

The protein localises to the cytoplasm. It carries out the reaction D-sedoheptulose 7-phosphate + D-glyceraldehyde 3-phosphate = D-erythrose 4-phosphate + beta-D-fructose 6-phosphate. Its pathway is carbohydrate degradation; pentose phosphate pathway; D-glyceraldehyde 3-phosphate and beta-D-fructose 6-phosphate from D-ribose 5-phosphate and D-xylulose 5-phosphate (non-oxidative stage): step 2/3. In terms of biological role, transaldolase is important for the balance of metabolites in the pentose-phosphate pathway. This chain is Probable transaldolase, found in Geobacter metallireducens (strain ATCC 53774 / DSM 7210 / GS-15).